The chain runs to 106 residues: UPF0145 protein VC_A0951 (106 aa).

Belongs to the UPF0145 family.

The sequence is that of UPF0145 protein VC_A0951 from Vibrio cholerae serotype O1 (strain ATCC 39315 / El Tor Inaba N16961).